The chain runs to 432 residues: Malate dehydrogenase [NADP], chloroplastic (432 aa).

The transit peptide at 1–40 directs the protein to the chloroplast; the sequence is MGLSTVYSPAGPRLVPAPLGRCRSAQPRRPRRAPLATVRC. The interval 18–37 is disordered; that stretch reads PLGRCRSAQPRRPRRAPLAT. An intrachain disulfide couples Cys67 to Cys72. Residue 96 to 102 participates in NADP(+) binding; it reads GAAGMIS. Substrate contacts are provided by Arg177 and Arg183. Asn190 is a binding site for NADP(+). NAD(+) is bound at residue Gln197. 214–216 provides a ligand contact to NADP(+); that stretch reads VGN. 2 residues coordinate substrate: Asn216 and Arg247. His272 functions as the Proton acceptor in the catalytic mechanism. Residues Cys408 and Cys420 are joined by a disulfide bond.

This sequence belongs to the LDH/MDH superfamily. MDH type 2 family. In terms of assembly, homodimer.

The protein localises to the plastid. The protein resides in the chloroplast. It catalyses the reaction (S)-malate + NADP(+) = oxaloacetate + NADPH + H(+). Chloroplast NADP-MDH is activated upon illumination. In order to be enzymatically active, disulfide bridges on the protein must be reduced by thioredoxin which receives electrons from ferredoxin and the electron transport system of photosynthesis. The chloroplastic, NADP-dependent form is essential for the photosynthesis C4 cycle, which allows plants to circumvent the problem of photorespiration. In C4 plants, NADP-MDH activity acts to convert oxaloacetate to malate in chloroplasts of mesophyll cells for transport to the bundle sheath cells. This chain is Malate dehydrogenase [NADP], chloroplastic, found in Zea mays (Maize).